Consider the following 352-residue polypeptide: Histidine biosynthesis bifunctional protein HisB (352 aa).

The histidinol-phosphatase stretch occupies residues 1 to 164 (MSQKILFIDR…EIENEILSSF (164 aa)). The Nucleophile role is filled by D9. The Mg(2+) site is built by D9 and D11. D11 (proton donor) is an active-site residue. Residues C93, H95, C101, and C103 each contribute to the Zn(2+) site. D130 provides a ligand contact to Mg(2+). An imidazoleglycerol-phosphate dehydratase region spans residues 165–352 (RSASYQRTTK…ENLASSKGVI (188 aa)).

In the N-terminal section; belongs to the histidinol-phosphatase family. It in the C-terminal section; belongs to the imidazoleglycerol-phosphate dehydratase family. Mg(2+) is required as a cofactor. Zn(2+) serves as cofactor.

Its subcellular location is the cytoplasm. It carries out the reaction D-erythro-1-(imidazol-4-yl)glycerol 3-phosphate = 3-(imidazol-4-yl)-2-oxopropyl phosphate + H2O. It catalyses the reaction L-histidinol phosphate + H2O = L-histidinol + phosphate. Its pathway is amino-acid biosynthesis; L-histidine biosynthesis; L-histidine from 5-phospho-alpha-D-ribose 1-diphosphate: step 6/9. The protein operates within amino-acid biosynthesis; L-histidine biosynthesis; L-histidine from 5-phospho-alpha-D-ribose 1-diphosphate: step 8/9. In Campylobacter jejuni subsp. jejuni serotype O:6 (strain 81116 / NCTC 11828), this protein is Histidine biosynthesis bifunctional protein HisB.